A 581-amino-acid chain; its full sequence is Chaperonin GroEL 1 (581 aa).

ATP contacts are provided by residues 29–32, 86–90, G413, and D492; these read TIGP and DGTTT.

This sequence belongs to the chaperonin (HSP60) family. Forms a cylinder of 14 subunits composed of two heptameric rings stacked back-to-back. Interacts with the co-chaperonin GroES.

It localises to the cytoplasm. The catalysed reaction is ATP + H2O + a folded polypeptide = ADP + phosphate + an unfolded polypeptide.. Together with its co-chaperonin GroES, plays an essential role in assisting protein folding. The GroEL-GroES system forms a nano-cage that allows encapsulation of the non-native substrate proteins and provides a physical environment optimized to promote and accelerate protein folding. This is Chaperonin GroEL 1 from Prochlorococcus marinus subsp. pastoris (strain CCMP1986 / NIES-2087 / MED4).